The following is a 358-amino-acid chain: Peptide chain release factor 1 (358 aa).

The residue at position 233 (Gln233) is an N5-methylglutamine.

The protein belongs to the prokaryotic/mitochondrial release factor family. In terms of processing, methylated by PrmC. Methylation increases the termination efficiency of RF1.

The protein resides in the cytoplasm. Its function is as follows. Peptide chain release factor 1 directs the termination of translation in response to the peptide chain termination codons UAG and UAA. In Clostridium botulinum (strain Loch Maree / Type A3), this protein is Peptide chain release factor 1.